The following is a 258-amino-acid chain: Transcription initiation factor TFIID subunit 9B (258 aa).

The residue at position 1 (Met-1) is an N-acetylmethionine. Ser-147 bears the Phosphoserine mark. A phosphothreonine mark is found at Thr-159 and Thr-174. The residue at position 177 (Ser-177) is a Phosphoserine. Polar residues predominate over residues 227 to 236 (SSQSTATDSN). The disordered stretch occupies residues 227–258 (SSQSTATDSNPLKRKHDDDDDDDDDDDDNDTM). Residues 244–258 (DDDDDDDDDDDNDTM) show a composition bias toward acidic residues.

Belongs to the TAF9 family. Binds TAF5 and TAF6. Component of TFIID and the TATA-binding protein-free TAF complex (TFTC). TFIID is composed of TATA binding protein (TBP) and a number of TBP-associated factors (TAFs). Binds N-terminal domain of p53/TP53 which is essential for transcription.

It is found in the nucleus. In terms of biological role, essential for cell viability. TAF9 and TAF9L are involved in transcriptional activation as well as repression of distinct but overlapping sets of genes. May have a role in gene regulation associated with apoptosis. TAFs are components of the transcription factor IID (TFIID) complex, the TBP-free TAFII complex (TFTC), the PCAF histone acetylase complex and the STAGA transcription coactivator-HAT complex. TFIID or TFTC are essential for the regulation of RNA polymerase II-mediated transcription. This is Transcription initiation factor TFIID subunit 9B (Taf9b) from Rattus norvegicus (Rat).